Consider the following 485-residue polypeptide: Homeobox protein unplugged (485 aa).

Disordered regions lie at residues 1–65 (MERP…QEQE), 114–157 (PAGH…DTRF), and 212–325 (GMAQ…RRTA). Residues 54-64 (RDQEQEAEQEQ) are compositionally biased toward acidic residues. The span at 114–128 (PAGHPAAQQPQAQAQ) shows a compositional bias: low complexity. Composition is skewed to polar residues over residues 223–234 (QAHSSPAKSGSH) and 254–267 (DSCS…SPRN). Positions 284-293 (DSEDCSDDEG) are enriched in acidic residues. Residues 308-317 (SQGNGSSSNS) show a composition bias toward low complexity. The segment at residues 319–378 (SRRRRTAFTSEQLLELEREFHAKKYLSLTERSQIATSLKLSEVQVKIWFQNRRAKWKRVK) is a DNA-binding region (homeobox).

As to expression, expressed in the neuroectodermal and mesectodermal cells at the ventral midline of stage 8 embryos, Subsequently, expression domains in the CNS widen and have their most anterior border in the posterior deutocerebrum. Oc/otd and unpg are mutual repressors at the interface of their brain-specific expression domains. Expression fades during germ band retraction and is then restricted to subset of cells by stage 14. Expressed in the founder cells of the cerebral branch within the first tracheal metamere. Outside the CNS, expression is seen in two clusters of ectodermal cells located laterally within the labial and first thoracic segments of stage 9 embryos. By stage 13, the expression is detected in a few cells close to the dorsal midline of the embryos.

The protein localises to the nucleus. Plays a regulatory role in neural branching of the tracheae: segment-specific aspects of these neural branching patterns appear to be generated by homeotic regulation of expression. May have a role with oc/otd in the postembryonic development of the brain. The sequence is that of Homeobox protein unplugged from Drosophila melanogaster (Fruit fly).